The following is a 251-amino-acid chain: Probable metal-binding protein YrpE (251 aa).

The first 30 residues, 1-30 (MNILFSKRLGILTIGSLLVLAGCQTSGSSA), serve as a signal peptide directing secretion. Over residues 25–41 (TSGSSAGESNQTTSSSA) the composition is skewed to polar residues. The disordered stretch occupies residues 25–72 (TSGSSAGESNQTTSSSAVEEDSSKTQEQTSDSHTHEHSHDHSHAHDEE). Over residues 54-72 (SDSHTHEHSHDHSHAHDEE) the composition is skewed to basic and acidic residues. 5 residues coordinate Zn(2+): His203, His212, His214, Glu247, and His251.

Belongs to the calycin superfamily. ZinT family.

In Bacillus subtilis (strain 168), this protein is Probable metal-binding protein YrpE (yrpE).